The primary structure comprises 334 residues: Syntaxin-18 (334 aa).

Topologically, residues 1–308 (MAVDITLLFR…EDIREAIKNN (308 aa)) are cytoplasmic. 2 disordered regions span residues 29 to 50 (GGAD…GDFS) and 166 to 225 (LSKL…GEDE). Composition is skewed to basic and acidic residues over residues 33-50 (GSRD…GDFS), 166-186 (LSKL…EKSS), and 193-207 (SEEK…EKPL). One can recognise a t-SNARE coiled-coil homology domain in the interval 242-304 (IGEMNSLFDE…KEGNEDIREA (63 aa)). Residues 309-329 (AGFRVWILFFLVMCSFSLLFL) form a helical; Anchor for type IV membrane protein membrane-spanning segment. Topologically, residues 330–334 (DWYDS) are vesicular.

The protein belongs to the syntaxin family. As to quaternary structure, component of a SNARE complex consisting of STX18, USE1L, BNIP1/SEC20L, and SEC22B. RINT1/TIP20L and ZW10 are associated with the complex through interaction with BNIP1/SEC20L. Interacts directly with USE1L and BNIP1/SEC20L.

The protein localises to the endoplasmic reticulum membrane. It is found in the golgi apparatus membrane. Functionally, syntaxin that may be involved in targeting and fusion of Golgi-derived retrograde transport vesicles with the ER. The protein is Syntaxin-18 (Stx18) of Rattus norvegicus (Rat).